We begin with the raw amino-acid sequence, 206 residues long: Proteasome subunit beta type-2 (206 aa).

This sequence belongs to the peptidase T1B family. As to quaternary structure, the 26S proteasome consists of a 20S proteasome core and two 19S regulatory subunits. The 20S proteasome core is composed of 28 subunits that are arranged in four stacked rings, resulting in a barrel-shaped structure. The two end rings are each formed by seven alpha subunits, and the two central rings are each formed by seven beta subunits. The catalytic chamber with the active sites is on the inside of the barrel.

The protein resides in the cytoplasm. It is found in the nucleus. In terms of biological role, non-catalytic component of the proteasome, a multicatalytic proteinase complex which is characterized by its ability to cleave peptides with Arg, Phe, Tyr, Leu, and Glu adjacent to the leaving group at neutral or slightly basic pH. The proteasome has an ATP-dependent proteolytic activity. The polypeptide is Proteasome subunit beta type-2 (PSB4) (Trypanosoma brucei brucei).